Reading from the N-terminus, the 226-residue chain is Eukaryotic translation initiation factor 3 subunit K (226 aa).

The PCI domain maps to 42 to 200 (YNLDANLSLL…QLIVLPRNEF (159 aa)).

The protein belongs to the eIF-3 subunit K family. As to quaternary structure, component of the eukaryotic translation initiation factor 3 (eIF-3) complex.

The protein resides in the cytoplasm. Functionally, component of the eukaryotic translation initiation factor 3 (eIF-3) complex, which is involved in protein synthesis of a specialized repertoire of mRNAs and, together with other initiation factors, stimulates binding of mRNA and methionyl-tRNAi to the 40S ribosome. The eIF-3 complex specifically targets and initiates translation of a subset of mRNAs involved in cell proliferation. This chain is Eukaryotic translation initiation factor 3 subunit K (TIF3K1), found in Oryza sativa subsp. japonica (Rice).